The chain runs to 156 residues: Probable succinate transporter subunit YjjB (156 aa).

4 consecutive transmembrane segments (helical) span residues 7 to 27 (WALLQDMVLAAVPALGFAMVF), 54 to 74 (FGMNIEWASFLAAILIGIIGI), 86 to 106 (VFTVAAVIPMFPGISAYTAMI), and 128 to 148 (FLKASFIVGALSIGLSLPGIW).

It belongs to the ThrE exporter (TC 2.A.79) family. As to quaternary structure, the transporter is composed of YjjB and YjjP.

It localises to the cell inner membrane. Involved in succinate export with YjjP. Both proteins are required for export. This is Probable succinate transporter subunit YjjB from Pectobacterium atrosepticum (strain SCRI 1043 / ATCC BAA-672) (Erwinia carotovora subsp. atroseptica).